The sequence spans 257 residues: V-type proton ATPase subunit D (257 aa).

Residues 211 to 233 (KKKDLKAKEAQKEENSANKTIME) form a disordered region. A compositionally biased stretch (basic and acidic residues) spans 216–226 (KAKEAQKEENS).

The protein belongs to the V-ATPase D subunit family. In terms of assembly, V-ATPase is a heteromultimeric enzyme composed of a peripheral catalytic V1 complex (components A to H) attached to an integral membrane V0 proton pore complex (components: a, c, c', c'' and d).

Its function is as follows. Subunit of the peripheral V1 complex of vacuolar ATPase. Vacuolar ATPase is responsible for acidifying a variety of intracellular compartments in eukaryotic cells, thus providing most of the energy required for transport processes in the vacuolar system. In Dictyostelium discoideum (Social amoeba), this protein is V-type proton ATPase subunit D (atp6v1d).